The following is a 722-amino-acid chain: Methionine--tRNA ligase (722 aa).

The 'HIGH' region signature appears at 11-21 (PYANGPIHAGH). C143, C146, C156, and C159 together coordinate Zn(2+). The 'KMSKS' region signature appears at 344–348 (KFSTS). ATP is bound at residue T347. Residues 622–722 (DFAKLDLRVG…KEVKLGAKVR (101 aa)) form the tRNA-binding domain.

Belongs to the class-I aminoacyl-tRNA synthetase family. MetG type 1 subfamily. In terms of assembly, homodimer. The cofactor is Zn(2+).

The protein resides in the cytoplasm. The catalysed reaction is tRNA(Met) + L-methionine + ATP = L-methionyl-tRNA(Met) + AMP + diphosphate. Is required not only for elongation of protein synthesis but also for the initiation of all mRNA translation through initiator tRNA(fMet) aminoacylation. This chain is Methionine--tRNA ligase, found in Pyrococcus abyssi (strain GE5 / Orsay).